A 247-amino-acid chain; its full sequence is Protein GrpE (247 aa).

Disordered regions lie at residues 1–64 (MNDE…QALD) and 214–247 (SMGPGPKDDGEETITEQSLEGDNTTDQQSSEKSD). Composition is skewed to polar residues over residues 30 to 39 (DEPSLSNVAE), 49 to 63 (DVTSSDAKDSSSQAL), and 228 to 241 (TEQSLEGDNTTDQQ).

This sequence belongs to the GrpE family. Homodimer.

The protein resides in the cytoplasm. Participates actively in the response to hyperosmotic and heat shock by preventing the aggregation of stress-denatured proteins, in association with DnaK and GrpE. It is the nucleotide exchange factor for DnaK and may function as a thermosensor. Unfolded proteins bind initially to DnaJ; upon interaction with the DnaJ-bound protein, DnaK hydrolyzes its bound ATP, resulting in the formation of a stable complex. GrpE releases ADP from DnaK; ATP binding to DnaK triggers the release of the substrate protein, thus completing the reaction cycle. Several rounds of ATP-dependent interactions between DnaJ, DnaK and GrpE are required for fully efficient folding. The chain is Protein GrpE from Prochlorococcus marinus (strain MIT 9211).